We begin with the raw amino-acid sequence, 316 residues long: Pantothenate kinase (316 aa).

An ATP-binding site is contributed by glycine 95 to serine 102.

The protein belongs to the prokaryotic pantothenate kinase family.

It localises to the cytoplasm. The enzyme catalyses (R)-pantothenate + ATP = (R)-4'-phosphopantothenate + ADP + H(+). The protein operates within cofactor biosynthesis; coenzyme A biosynthesis; CoA from (R)-pantothenate: step 1/5. This Shewanella oneidensis (strain ATCC 700550 / JCM 31522 / CIP 106686 / LMG 19005 / NCIMB 14063 / MR-1) protein is Pantothenate kinase.